Consider the following 270-residue polypeptide: 5'-nucleotidase SurE (270 aa).

A divalent metal cation-binding residues include Asp8, Asp9, Ser40, and Asn98.

The protein belongs to the SurE nucleotidase family. It depends on a divalent metal cation as a cofactor.

Its subcellular location is the cytoplasm. The enzyme catalyses a ribonucleoside 5'-phosphate + H2O = a ribonucleoside + phosphate. In terms of biological role, nucleotidase that shows phosphatase activity on nucleoside 5'-monophosphates. This Cyanothece sp. (strain PCC 7425 / ATCC 29141) protein is 5'-nucleotidase SurE.